Here is a 444-residue protein sequence, read N- to C-terminus: Acyl-CoA 6-desaturase (444 aa).

Over Met1 to Pro130 the chain is Cytoplasmic. The Cytochrome b5 heme-binding domain maps to Phe18 to Glu95. Residues Leu131–Val151 traverse the membrane as a helical segment. Topologically, residues Trp152–Gly157 are lumenal. A helical transmembrane segment spans residues Trp158–Leu178. Residues Gln179–Lys264 lie on the Cytoplasmic side of the membrane. The Histidine box-1 signature appears at His180–His184. The Histidine box-2 signature appears at His217–His221. The helical transmembrane segment at Tyr265 to His285 threads the bilayer. Residues Asn286–Arg305 lie on the Lumenal side of the membrane. Residues Tyr306–Val326 traverse the membrane as a helical segment. The Cytoplasmic segment spans residues Arg327 to Lys444. The short motif at Gln382 to His386 is the Histidine box-3 element.

It belongs to the fatty acid desaturase type 1 family.

The protein localises to the endoplasmic reticulum membrane. The catalysed reaction is (9Z,12Z)-octadecadienoyl-CoA + 2 Fe(II)-[cytochrome b5] + O2 + 2 H(+) = (6Z,9Z,12Z)-octadecatrienoyl-CoA + 2 Fe(III)-[cytochrome b5] + 2 H2O. The enzyme catalyses (9Z,12Z,15Z)-octadecatrienoyl-CoA + 2 Fe(II)-[cytochrome b5] + O2 + 2 H(+) = (6Z,9Z,12Z,15Z)-octadecatetraenoyl-CoA + 2 Fe(III)-[cytochrome b5] + 2 H2O. It catalyses the reaction (8Z,11Z,14Z,17Z)-eicosatetraenoyl-CoA + 2 Fe(II)-[cytochrome b5] + O2 + 2 H(+) = (5Z,8Z,11Z,14Z,17Z)-eicosapentaenoyl-CoA + 2 Fe(III)-[cytochrome b5] + 2 H2O. It carries out the reaction (8Z,11Z,14Z)-eicosatrienoyl-CoA + 2 Fe(II)-[cytochrome b5] + O2 + 2 H(+) = (5Z,8Z,11Z,14Z)-eicosatetraenoyl-CoA + 2 Fe(III)-[cytochrome b5] + 2 H2O. It functions in the pathway lipid metabolism; polyunsaturated fatty acid biosynthesis. In terms of biological role, fatty acid desaturase with bifunctional delta-5 and delta-6 activities. Component of a lipid metabolic pathway that catalyzes the biosynthesis of polyunsaturated fatty acids (PUFA) with preference toward n-3 substrates and Delta-6 function. This is Acyl-CoA 6-desaturase (fads2) from Danio rerio (Zebrafish).